A 145-amino-acid polypeptide reads, in one-letter code: D-aminoacyl-tRNA deacylase (145 aa).

The short motif at 137 to 138 is the Gly-cisPro motif, important for rejection of L-amino acids element; the sequence is GP.

This sequence belongs to the DTD family. As to quaternary structure, homodimer.

The protein resides in the cytoplasm. It carries out the reaction glycyl-tRNA(Ala) + H2O = tRNA(Ala) + glycine + H(+). It catalyses the reaction a D-aminoacyl-tRNA + H2O = a tRNA + a D-alpha-amino acid + H(+). In terms of biological role, an aminoacyl-tRNA editing enzyme that deacylates mischarged D-aminoacyl-tRNAs. Also deacylates mischarged glycyl-tRNA(Ala), protecting cells against glycine mischarging by AlaRS. Acts via tRNA-based rather than protein-based catalysis; rejects L-amino acids rather than detecting D-amino acids in the active site. By recycling D-aminoacyl-tRNA to D-amino acids and free tRNA molecules, this enzyme counteracts the toxicity associated with the formation of D-aminoacyl-tRNA entities in vivo and helps enforce protein L-homochirality. This is D-aminoacyl-tRNA deacylase from Enterobacter sp. (strain 638).